The following is a 199-amino-acid chain: Ribosome biogenesis protein RLP24 (199 aa).

Positions 147–182 are disordered; the sequence is KEQERAESVSEQEESEEEEEDMEIDSDEEEEEQLEK. A compositionally biased stretch (acidic residues) spans 156–179; sequence SEQEESEEEEEDMEIDSDEEEEEQ. S172 bears the Phosphoserine mark.

The protein belongs to the eukaryotic ribosomal protein eL24 family. In terms of assembly, associated with nucleolar and cytoplasmic pre-60S particles. At the end of biogenesis it dissociates from cytoplasmic pre-60S particles and is likely to be exchanged for its ribosomal homolog, RPL24. Interacts (via C-terminus) with AFG2 (hexameric form); the interaction is direct, recruits AFG2 to pre-60S ribosomal particles and promotes AFG2 ATPase activity and RLP24 release from pre-60S ribosomal particles. Interacts with NOG1; the interaction is direct.

The protein resides in the cytoplasm. Its subcellular location is the nucleus. Functionally, involved in the biogenesis of the 60S ribosomal subunit. Ensures the docking of NOG1 to pre-60S ribosomal particles. Activates and recruits ATPase AFG2 to cytoplasmic pre-60S ribosomal particles. This is Ribosome biogenesis protein RLP24 (RLP24) from Saccharomyces cerevisiae (strain ATCC 204508 / S288c) (Baker's yeast).